Reading from the N-terminus, the 444-residue chain is Cell wall mannoprotein PST1 (444 aa).

The first 19 residues, 1-19 (MQLHSLIASTALLITSALA), serve as a signal peptide directing secretion. N-linked (GlcNAc...) asparagine glycosylation is found at Asn57, Asn76, Asn83, Asn86, Asn196, Asn210, Asn228, Asn235, Asn242, Asn263, Asn268, Asn280, Asn292, Asn305, and Asn329. Composition is skewed to low complexity over residues 359-381 (SVKL…SKSS) and 395-418 (KAAA…SSKG). A disordered region spans residues 359–418 (SVKLSSTSKSQSSQTTAKVSKSSSKAEEKKFTSGDIKAAASASSVSSSGASSSSSKSSKG). Asn419 carries GPI-anchor amidated asparagine lipidation. The propeptide at 420–444 (AAIMAPIGQTTPLVGLLTAIIMSIM) is removed in mature form.

Belongs to the SPS2 family. In terms of processing, extensively N- and O-mannosylated.

It is found in the cell membrane. It localises to the secreted. The protein localises to the cell wall. Its function is as follows. Has a partially redundant function to ECM33 in cell wall integrity. May be involved in a repair mechanism activated in response to cell wall damage. This is Cell wall mannoprotein PST1 (PST1) from Saccharomyces cerevisiae (strain ATCC 204508 / S288c) (Baker's yeast).